Reading from the N-terminus, the 428-residue chain is uncharacterized protein (428 aa).

10 helical membrane passes run 26–46 (VALT…DDVF), 51–71 (AGID…VSVL), 90–110 (AAPL…SALL), 135–155 (TPFL…TLVG), 177–197 (MAPA…WLLG), 223–243 (LLIK…AHPV), 278–298 (TLLF…TGVV), 314–334 (LLTV…IDNI), 359–379 (TFWW…AVAA), and 407–427 (VVTA…YFVF).

This sequence belongs to the CitM (TC 2.A.11) transporter family.

It localises to the cell membrane. This is an uncharacterized protein from Mycobacterium tuberculosis (strain CDC 1551 / Oshkosh).